The chain runs to 400 residues: 1-deoxy-D-xylulose 5-phosphate reductoisomerase (400 aa).

Residues Thr10, Gly11, Ser12, Ile13, Gly36, Asn38, and Asn124 each contribute to the NADPH site. Lys125 contributes to the 1-deoxy-D-xylulose 5-phosphate binding site. Glu126 lines the NADPH pocket. Mn(2+) is bound at residue Asp150. Residues Ser151, Glu152, Ser186, and His209 each contribute to the 1-deoxy-D-xylulose 5-phosphate site. A Mn(2+)-binding site is contributed by Glu152. Position 215 (Gly215) interacts with NADPH. 1-deoxy-D-xylulose 5-phosphate contacts are provided by Ser222, Asn227, Lys228, and Glu231. Glu231 lines the Mn(2+) pocket.

It belongs to the DXR family. It depends on Mg(2+) as a cofactor. The cofactor is Mn(2+).

It carries out the reaction 2-C-methyl-D-erythritol 4-phosphate + NADP(+) = 1-deoxy-D-xylulose 5-phosphate + NADPH + H(+). The protein operates within isoprenoid biosynthesis; isopentenyl diphosphate biosynthesis via DXP pathway; isopentenyl diphosphate from 1-deoxy-D-xylulose 5-phosphate: step 1/6. Catalyzes the NADPH-dependent rearrangement and reduction of 1-deoxy-D-xylulose-5-phosphate (DXP) to 2-C-methyl-D-erythritol 4-phosphate (MEP). The chain is 1-deoxy-D-xylulose 5-phosphate reductoisomerase from Aliivibrio salmonicida (strain LFI1238) (Vibrio salmonicida (strain LFI1238)).